Here is a 177-residue protein sequence, read N- to C-terminus: Ribulose bisphosphate carboxylase small subunit, chloroplastic 4 (177 aa).

The N-terminal 56 residues, 1 to 56, are a transit peptide targeting the chloroplast; sequence MASSMMASTAAAVARAGPAQTNMVPFNACRSSVPFPATRKANNDLSTLPSNGGRVS.

It belongs to the RuBisCO small chain family. In terms of assembly, heterohexadecamer of 8 large and 8 small subunits.

It localises to the plastid. It is found in the chloroplast. Functionally, ruBisCO catalyzes two reactions: the carboxylation of D-ribulose 1,5-bisphosphate, the primary event in carbon dioxide fixation, as well as the oxidative fragmentation of the pentose substrate. Both reactions occur simultaneously and in competition at the same active site. Although the small subunit is not catalytic it is essential for maximal activity. In Lemna gibba (Swollen duckweed), this protein is Ribulose bisphosphate carboxylase small subunit, chloroplastic 4.